Reading from the N-terminus, the 57-residue chain is DNA gyrase inhibitor YacG (57 aa).

4 residues coordinate Zn(2+): C10, C13, C25, and C29.

This sequence belongs to the DNA gyrase inhibitor YacG family. Interacts with GyrB. It depends on Zn(2+) as a cofactor.

Inhibits all the catalytic activities of DNA gyrase by preventing its interaction with DNA. Acts by binding directly to the C-terminal domain of GyrB, which probably disrupts DNA binding by the gyrase. This is DNA gyrase inhibitor YacG from Brucella abortus (strain 2308).